Here is a 29-residue protein sequence, read N- to C-terminus: Glucagon (29 aa).

The protein belongs to the glucagon family.

The protein localises to the secreted. Functionally, glucagon plays a key role in glucose metabolism and homeostasis. Regulates blood glucose by increasing gluconeogenesis and decreasing glycolysis. This Struthio camelus (Common ostrich) protein is Glucagon (GCG).